A 530-amino-acid chain; its full sequence is Inactive ubiquitin carboxyl-terminal hydrolase 17-like protein 7 (530 aa).

The 296-residue stretch at 80-375 (AGLQKIGNTF…QAYVLFYIQK (296 aa)) folds into the USP domain. Residues 382 to 392 (SESVSRGREPR) show a composition bias toward basic and acidic residues. Disordered stretches follow at residues 382–412 (SESV…KRDH), 431–454 (ESTL…NVRK), and 490–530 (SSTK…LVCQ). Over residues 490–512 (SSTKPTDQESMNTGTLASLQGST) the composition is skewed to polar residues. Over residues 513-524 (RRSKGNNKHSKR) the composition is skewed to basic residues.

The protein belongs to the peptidase C19 family. USP17 subfamily.

Its subcellular location is the nucleus. It localises to the endoplasmic reticulum. The polypeptide is Inactive ubiquitin carboxyl-terminal hydrolase 17-like protein 7 (USP17L7) (Homo sapiens (Human)).